The sequence spans 73 residues: Somatostatin-2 (73 aa).

Residues 1 to 45 constitute a propeptide that is removed on maturation; that stretch reads SAGLLTQEWSAVEDLLAQMSLPEADAQRDAEMVSTATGGGRMNQE. The tract at residues 23-58 is disordered; that stretch reads EADAQRDAEMVSTATGGGRMNQESIEPPNNLPPRER. A disulfide bridge links cysteine 62 with cysteine 73.

Belongs to the somatostatin family.

Its subcellular location is the secreted. Its function is as follows. Somatostatin inhibits the release of somatotropin. The polypeptide is Somatostatin-2 (sst2) (Platichthys flesus (European flounder)).